The sequence spans 1101 residues: Translation initiation factor IF-2 (1101 aa).

Disordered regions lie at residues 81-437 (QEIL…EDDF) and 452-509 (SIST…QRAE). The span at 93–108 (PFSSTDAPVGSGQSSP) shows a compositional bias: polar residues. Residues 110-124 (IEPPRPPMKPQPPSP) show a composition bias toward pro residues. Composition is skewed to polar residues over residues 128–149 (EVTSPITDEPVSTQEDTNGSSS) and 157–184 (SPMSPFDQQQPEQNTTDHNQEQQNQLKY). The span at 185 to 196 (NQEQSNQLEQES) shows a compositional bias: low complexity. The span at 197 to 206 (AISSELSEVN) shows a compositional bias: polar residues. Basic and acidic residues-rich tracts occupy residues 228 to 237 (SKEKEAKSNE), 248 to 288 (KENK…DKKS), and 295 to 340 (VKRE…ELKR). Positions 361 to 378 (EPEDVEDTAEDLLEEDPL) are enriched in acidic residues. Composition is skewed to basic residues over residues 385–397 (PKLKRPTPPKVGK) and 414–428 (KAGKAAKAGKNKRRQ). Basic and acidic residues predominate over residues 484–506 (EPGRGKSAERERSERKDRKEQPQ). Residues 592–765 (RRPPVVTIMG…LLVAEVGELS (174 aa)) form the tr-type G domain. Residues 601-608 (GHVDHGKT) form a G1 region. Residue 601–608 (GHVDHGKT) participates in GTP binding. Positions 626-630 (GITQH) are G2. Residues 651-654 (DTPG) form a G3 region. Residues 651-655 (DTPGH) and 705-708 (NKID) contribute to the GTP site. Residues 705–708 (NKID) form a G4 region. The interval 741 to 743 (SAL) is G5.

Belongs to the TRAFAC class translation factor GTPase superfamily. Classic translation factor GTPase family. IF-2 subfamily.

The protein resides in the cytoplasm. In terms of biological role, one of the essential components for the initiation of protein synthesis. Protects formylmethionyl-tRNA from spontaneous hydrolysis and promotes its binding to the 30S ribosomal subunits. Also involved in the hydrolysis of GTP during the formation of the 70S ribosomal complex. The polypeptide is Translation initiation factor IF-2 (Gloeothece citriformis (strain PCC 7424) (Cyanothece sp. (strain PCC 7424))).